We begin with the raw amino-acid sequence, 2531 residues long: Serine/threonine-protein kinase ATR (2531 aa).

One can recognise an FAT domain in the interval 1490–2067; sequence LIVKVAETFG…MWQSAYLLRQ (578 aa). The PI3K/PI4K catalytic domain maps to 2192–2512; the sequence is FSDKVKVLHS…VSQLASSLIE (321 aa). Positions 2198–2204 are G-loop; the sequence is VLHSNTK. A catalytic loop region spans residues 2368-2376; sequence GLGDRHTKN. Positions 2387 to 2411 are activation loop; sequence HVDFDMIFNKGETLGTPELVPFRLT. The FATC domain occupies 2499 to 2531; the sequence is HPMQVSQLASSLIELATSEEKLSEMYLGWMATL.

Belongs to the PI3/PI4-kinase family. ATM subfamily. Mn(2+) is required as a cofactor.

Its subcellular location is the nucleus. The catalysed reaction is L-seryl-[protein] + ATP = O-phospho-L-seryl-[protein] + ADP + H(+). It carries out the reaction L-threonyl-[protein] + ATP = O-phospho-L-threonyl-[protein] + ADP + H(+). Functionally, serine/threonine protein kinase which activates checkpoint signaling upon genotoxic stresses such as ionizing radiation (IR), ultraviolet light (UV), or DNA replication stalling, thereby acting as a DNA damage sensor. Recognizes the substrate consensus sequence [ST]-Q. Phosphorylates various proteins, which collectively inhibits DNA replication and mitosis and promotes DNA repair and recombination. Prevents mitotic catastrophe by functioning in the S-phase checkpoint and cooperating with atm-1 in the checkpoint response to double-strand breaks (DSBs) after ionizing radiation (IR) to induce cell cycle arrest or apoptosis via the cep-1/p53 pathway. In response to ionizing radiation, probably required for the association between the brc-1-brd-1 heterodimer and rad-51 and let-70 in order to activate E3-ubiquitin ligase activity of the heterodimer and induce ubiquitination at DNA damage sites. The sequence is that of Serine/threonine-protein kinase ATR from Caenorhabditis elegans.